The sequence spans 181 residues: Inner membrane-spanning protein YciB (181 aa).

The next 5 membrane-spanning stretches (helical) occupy residues 10–30 (LIIF…GALI), 50–70 (MHLI…VFHD), 72–92 (AFIK…LGVS), 118–138 (VTWY…YVAF), and 148–168 (FKVF…VFYL).

Belongs to the YciB family.

Its subcellular location is the cell inner membrane. In terms of biological role, plays a role in cell envelope biogenesis, maintenance of cell envelope integrity and membrane homeostasis. This chain is Inner membrane-spanning protein YciB, found in Shewanella sp. (strain MR-7).